A 345-amino-acid chain; its full sequence is Ribosome production factor 1 (345 aa).

2 disordered regions span residues 1 to 57 (MAKA…ISEI) and 70 to 105 (WKQQQRKEKLAAKKKLKREREALGDKAPPKPVPKTI). Basic and acidic residues predominate over residues 87-97 (REREALGDKAP). The Brix domain maps to 142–325 (PKILITTSDR…LRSLQKGTFD (184 aa)). The RNA-binding stretch occupies residues 303–320 (VGIQELGPRFTLKLRSLQ).

The protein resides in the nucleus. It is found in the nucleolus. Functionally, may be required for ribosome biogenesis. This Rattus norvegicus (Rat) protein is Ribosome production factor 1 (Rpf1).